Here is a 680-residue protein sequence, read N- to C-terminus: DNA-directed RNA polymerase subunit beta' (680 aa).

Residues cysteine 69, cysteine 71, cysteine 87, and cysteine 90 each contribute to the Zn(2+) site. Residues aspartate 489, aspartate 491, and aspartate 493 each contribute to the Mg(2+) site.

Belongs to the RNA polymerase beta' chain family. RpoC1 subfamily. As to quaternary structure, in plastids the minimal PEP RNA polymerase catalytic core is composed of four subunits: alpha, beta, beta', and beta''. When a (nuclear-encoded) sigma factor is associated with the core the holoenzyme is formed, which can initiate transcription. Mg(2+) serves as cofactor. Zn(2+) is required as a cofactor.

Its subcellular location is the plastid. It localises to the chloroplast. The catalysed reaction is RNA(n) + a ribonucleoside 5'-triphosphate = RNA(n+1) + diphosphate. Functionally, DNA-dependent RNA polymerase catalyzes the transcription of DNA into RNA using the four ribonucleoside triphosphates as substrates. The sequence is that of DNA-directed RNA polymerase subunit beta' from Draba nemorosa (Woodland whitlowgrass).